The sequence spans 427 residues: Trigger factor (427 aa).

In terms of domain architecture, PPIase FKBP-type spans 163-248 (GDVVNLDFDG…INEVKSKEVP (86 aa)).

The protein belongs to the FKBP-type PPIase family. Tig subfamily.

It is found in the cytoplasm. It carries out the reaction [protein]-peptidylproline (omega=180) = [protein]-peptidylproline (omega=0). Involved in protein export. Acts as a chaperone by maintaining the newly synthesized protein in an open conformation. Functions as a peptidyl-prolyl cis-trans isomerase. This chain is Trigger factor, found in Macrococcus caseolyticus (strain JCSC5402) (Macrococcoides caseolyticum).